The primary structure comprises 556 residues: Myb/SANT-like DNA-binding domain-containing protein 2 (556 aa).

2 stretches are compositionally biased toward polar residues: residues 1–10 (MAASCGSSQL) and 36–45 (GNPSLSDPST). The interval 1-82 (MAASCGSSQL…GGASPSVSFS (82 aa)) is disordered. A compositionally biased stretch (gly residues) spans 56 to 74 (PAAGGAGLGGGGAAGGRGG). One can recognise a Myb-like domain in the interval 99 to 169 (SWTPAETNAL…QCRERIKTLR (71 aa)). The segment at 431–458 (PRSPLAEPRGADPSNETPGELEVPSPQA) is disordered.

The polypeptide is Myb/SANT-like DNA-binding domain-containing protein 2 (MSANTD2) (Gallus gallus (Chicken)).